Reading from the N-terminus, the 488-residue chain is Transmembrane protein 39A (488 aa).

Asn-31 and Asn-39 each carry an N-linked (GlcNAc...) asparagine glycan. Helical transmembrane passes span 72 to 92 (SLLF…IQYI), 110 to 130 (TSLN…VMLA), 154 to 174 (VLIS…CWTL), 182 to 202 (SVLN…LCCF), 287 to 307 (EVLF…LCFV), 319 to 339 (CEHL…QLLP), 420 to 440 (LLNL…YSLL), and 446 to 466 (NHTL…FKLL).

Belongs to the TMEM39 family. As to quaternary structure, interacts with SACM1L, SEC23A and SEC24A.

The protein resides in the endoplasmic reticulum membrane. Functionally, regulates autophagy by controlling the spatial distribution and levels of the intracellular phosphatidylinositol 4-phosphate (PtdIns(4)P) pools. Modulates (PtdIns(4)P) levels by regulating the ER-to-Golgi trafficking of the phosphatidylinositide phosphatase SACM1L. The protein is Transmembrane protein 39A (TMEM39A) of Bos taurus (Bovine).